We begin with the raw amino-acid sequence, 152 residues long: Superoxide dismutase [Cu-Zn] 2 (152 aa).

Residues H45, H47, and H62 each coordinate Cu cation. C56 and C145 are disulfide-bonded. Zn(2+) contacts are provided by H62, H70, H79, and D82. H119 lines the Cu cation pocket.

The protein belongs to the Cu-Zn superoxide dismutase family. Homodimer. It depends on Cu cation as a cofactor. Zn(2+) serves as cofactor.

The protein localises to the cytoplasm. It carries out the reaction 2 superoxide + 2 H(+) = H2O2 + O2. Its function is as follows. Destroys radicals which are normally produced within the cells and which are toxic to biological systems. In Oryza sativa subsp. japonica (Rice), this protein is Superoxide dismutase [Cu-Zn] 2 (SODCC2).